Reading from the N-terminus, the 209-residue chain is Uracil phosphoribosyltransferase (209 aa).

5-phospho-alpha-D-ribose 1-diphosphate-binding positions include Arg-79, Arg-104, and 131–139; that span reads DPMLATGGS. Uracil contacts are provided by residues Ile-194 and 199 to 201; that span reads GDA. A 5-phospho-alpha-D-ribose 1-diphosphate-binding site is contributed by Asp-200.

This sequence belongs to the UPRTase family. The cofactor is Mg(2+).

The catalysed reaction is UMP + diphosphate = 5-phospho-alpha-D-ribose 1-diphosphate + uracil. It functions in the pathway pyrimidine metabolism; UMP biosynthesis via salvage pathway; UMP from uracil: step 1/1. Its activity is regulated as follows. Allosterically activated by GTP. Catalyzes the conversion of uracil and 5-phospho-alpha-D-ribose 1-diphosphate (PRPP) to UMP and diphosphate. This is Uracil phosphoribosyltransferase from Streptococcus uberis (strain ATCC BAA-854 / 0140J).